The primary structure comprises 370 residues: Anhydro-N-acetylmuramic acid kinase (370 aa).

13 to 20 (GTSMDGID) contacts ATP.

This sequence belongs to the anhydro-N-acetylmuramic acid kinase family.

The enzyme catalyses 1,6-anhydro-N-acetyl-beta-muramate + ATP + H2O = N-acetyl-D-muramate 6-phosphate + ADP + H(+). It functions in the pathway amino-sugar metabolism; 1,6-anhydro-N-acetylmuramate degradation. It participates in cell wall biogenesis; peptidoglycan recycling. Its function is as follows. Catalyzes the specific phosphorylation of 1,6-anhydro-N-acetylmuramic acid (anhMurNAc) with the simultaneous cleavage of the 1,6-anhydro ring, generating MurNAc-6-P. Is required for the utilization of anhMurNAc either imported from the medium or derived from its own cell wall murein, and thus plays a role in cell wall recycling. This chain is Anhydro-N-acetylmuramic acid kinase, found in Rhizobium etli (strain ATCC 51251 / DSM 11541 / JCM 21823 / NBRC 15573 / CFN 42).